The sequence spans 292 residues: Shikimate dehydrogenase (NADP(+)) (292 aa).

Shikimate-binding positions include 22–24 (SLS) and Ser69. Lys73 functions as the Proton acceptor in the catalytic mechanism. Shikimate is bound by residues Asn94 and Asp111. NADP(+) is bound by residues 135-139 (GVGGA) and Ile236. Tyr238 is a shikimate binding site. Gly260 provides a ligand contact to NADP(+).

It belongs to the shikimate dehydrogenase family. In terms of assembly, homodimer.

It carries out the reaction shikimate + NADP(+) = 3-dehydroshikimate + NADPH + H(+). It functions in the pathway metabolic intermediate biosynthesis; chorismate biosynthesis; chorismate from D-erythrose 4-phosphate and phosphoenolpyruvate: step 4/7. In terms of biological role, involved in the biosynthesis of the chorismate, which leads to the biosynthesis of aromatic amino acids. Catalyzes the reversible NADPH linked reduction of 3-dehydroshikimate (DHSA) to yield shikimate (SA). The polypeptide is Shikimate dehydrogenase (NADP(+)) (Streptococcus pyogenes serotype M28 (strain MGAS6180)).